The primary structure comprises 503 residues: Glycerol kinase (503 aa).

Residue Thr12 coordinates ADP. ATP contacts are provided by Thr12, Thr13, and Ser14. Thr12 is a sn-glycerol 3-phosphate binding site. Position 16 (Arg16) interacts with ADP. Positions 82, 83, 134, and 243 each coordinate sn-glycerol 3-phosphate. Arg82, Glu83, Tyr134, Asp243, and Gln244 together coordinate glycerol. ADP is bound by residues Thr265 and Gly308. ATP contacts are provided by Thr265, Gly308, Gln312, and Gly412. Gly412 contributes to the ADP binding site.

It belongs to the FGGY kinase family.

It catalyses the reaction glycerol + ATP = sn-glycerol 3-phosphate + ADP + H(+). The protein operates within polyol metabolism; glycerol degradation via glycerol kinase pathway; sn-glycerol 3-phosphate from glycerol: step 1/1. Its activity is regulated as follows. Inhibited by fructose 1,6-bisphosphate (FBP). In terms of biological role, key enzyme in the regulation of glycerol uptake and metabolism. Catalyzes the phosphorylation of glycerol to yield sn-glycerol 3-phosphate. This is Glycerol kinase from Nitrobacter hamburgensis (strain DSM 10229 / NCIMB 13809 / X14).